The chain runs to 159 residues: Putative ribosomal RNA large subunit methyltransferase H (159 aa).

S-adenosyl-L-methionine is bound by residues L76, G108, and F127–F132.

This sequence belongs to the RNA methyltransferase RlmH family.

The protein localises to the cytoplasm. It carries out the reaction pseudouridine(1915) in 23S rRNA + S-adenosyl-L-methionine = N(3)-methylpseudouridine(1915) in 23S rRNA + S-adenosyl-L-homocysteine + H(+). Functionally, specifically methylates the pseudouridine at position 1915 (m3Psi1915) in 23S rRNA. This Methanococcus maripaludis (strain C6 / ATCC BAA-1332) protein is Putative ribosomal RNA large subunit methyltransferase H.